Consider the following 344-residue polypeptide: Meiotically up-regulated gene 10 protein (344 aa).

The region spanning 48-207 (EFNSILQEII…RELCSYIDQE (160 aa)) is the DH domain.

The protein resides in the cytoplasm. Its subcellular location is the nucleus. Its function is as follows. Has a role in meiosis. In Schizosaccharomyces pombe (strain 972 / ATCC 24843) (Fission yeast), this protein is Meiotically up-regulated gene 10 protein (mug10).